The primary structure comprises 291 residues: Kidney mitochondrial carrier protein 1 (291 aa).

Ser-2 carries the post-translational modification N-acetylserine. 3 Solcar repeats span residues 7 to 96 (KPFV…LKRL), 104 to 189 (ETLL…TKKH), and 198 to 289 (DTVA…LKKL). The next 6 membrane-spanning stretches (helical) occupy residues 9–26 (FVYG…TFPI), 71–89 (GIAP…KIGT), 106–124 (LLVN…SAIA), 164–183 (GVSL…LPVY), 204–224 (FLSS…VDVV), and 264–283 (GFWP…FLTY).

Belongs to the mitochondrial carrier (TC 2.A.29) family. Interacts with VDAC1. Present in kidney (at protein level). Expressed predominantly within the kidney cortex in the proximal and distal tubules and at lower levels in the testis and white adipose tissue.

Its subcellular location is the mitochondrion inner membrane. The catalysed reaction is sulfite(in) + sulfate(out) = sulfite(out) + sulfate(in). The enzyme catalyses thiosulfate(in) + sulfate(out) = thiosulfate(out) + sulfate(in). It carries out the reaction sulfate(out) + phosphate(in) = sulfate(in) + phosphate(out). It catalyses the reaction oxalate(in) + sulfate(out) = oxalate(out) + sulfate(in). The catalysed reaction is malonate(in) + sulfate(out) = malonate(out) + sulfate(in). The enzyme catalyses maleate(in) + sulfate(out) = maleate(out) + sulfate(in). It carries out the reaction (S)-malate(in) + sulfate(out) = (S)-malate(out) + sulfate(in). It catalyses the reaction (3S)-citramalate(in) + sulfate(out) = (3S)-citramalate(out) + sulfate(in). The catalysed reaction is (3R)-citramalate(in) + sulfate(out) = (3R)-citramalate(out) + sulfate(in). The enzyme catalyses sulfate(out) + succinate(in) = sulfate(in) + succinate(out). It carries out the reaction (S,S)-tartrate(in) + sulfate(out) = (S,S)-tartrate(out) + sulfate(in). It catalyses the reaction (2R,3R)-tartrate(in) + sulfate(out) = (2R,3R)-tartrate(out) + sulfate(in). The catalysed reaction is D-aspartate(in) + sulfate(out) = D-aspartate(out) + sulfate(in). The enzyme catalyses L-aspartate(in) + sulfate(out) = L-aspartate(out) + sulfate(in). It carries out the reaction sulfate(in) = sulfate(out). It catalyses the reaction phosphate(in) = phosphate(out). The catalysed reaction is (S)-malate(out) = (S)-malate(in). Functionally, antiporter that transports inorganic anions (sulfate, sulfite, thiosulfate and phosphate) and, to a lesser extent, a variety of dicarboxylates (e.g. malonate, malate and citramalate) and, even more so, aspartate. The sulfate/sulfate exchange is much higher than the phosphate/phosphate and malate/malate exchanges. The transport affinities is higher for sulfate and thiosulfate than for any other substrate. May catalyze the export of sulfite and thiosulfate (the hydrogen sulfide degradation products) from the mitochondria, thereby modulating the level of the hydrogen sulfide. Also may mediate a very low unidirectional transport of sulfate, phosphate and (S)-malate. This Mus musculus (Mouse) protein is Kidney mitochondrial carrier protein 1.